Consider the following 381-residue polypeptide: Cytosolic acyl coenzyme A thioester hydrolase (381 aa).

In terms of domain architecture, HotDog ACOT-type 1 spans 51–169 (PGHCIAMGRI…TLWYVPLSLK (119 aa)). Residue Asn67 is part of the active site. 2 positions are modified to N6-acetyllysine: Lys169 and Lys199. Positions 225-339 (SYSQSSLIHL…FFTYVSLNQE (115 aa)) constitute a HotDog ACOT-type 2 domain. Residue Asp256 is part of the active site. Lys284 carries the N6-acetyllysine modification. Residues 343 to 381 (LPVPQLVPETEDEKKRFEEGKGRYLQMKAKRQGHTEPQP) form a disordered region. Over residues 354 to 364 (DEKKRFEEGKG) the composition is skewed to basic and acidic residues.

In terms of assembly, homohexamer. The N-terminus is blocked. Isoform 1 is expressed constitutively in brain and testis. Isoform 2 is induced in liver by treatment with the peroxisome proliferator.

It localises to the cytoplasm. It is found in the cytosol. The enzyme catalyses hexadecanoyl-CoA + H2O = hexadecanoate + CoA + H(+). It carries out the reaction dodecanoyl-CoA + H2O = dodecanoate + CoA + H(+). It catalyses the reaction tetradecanoyl-CoA + H2O = tetradecanoate + CoA + H(+). The catalysed reaction is decanoyl-CoA + H2O = decanoate + CoA + H(+). The enzyme catalyses octanoyl-CoA + H2O = octanoate + CoA + H(+). It carries out the reaction octadecanoyl-CoA + H2O = octadecanoate + CoA + H(+). It catalyses the reaction (9Z)-octadecenoyl-CoA + H2O = (9Z)-octadecenoate + CoA + H(+). It participates in lipid metabolism; fatty acid metabolism. Functionally, catalyzes the hydrolysis of acyl-CoAs into free fatty acids and coenzyme A (CoASH), regulating their respective intracellular levels. Preferentially hydrolyzes palmitoyl-CoA, but has a broad specificity acting on other fatty acyl-CoAs with chain-lengths of C8-C18. May play an important physiological function in brain. The protein is Cytosolic acyl coenzyme A thioester hydrolase (Acot7) of Rattus norvegicus (Rat).